Consider the following 119-residue polypeptide: Large ribosomal subunit protein uL22 (119 aa).

Belongs to the universal ribosomal protein uL22 family. As to quaternary structure, part of the 50S ribosomal subunit.

This protein binds specifically to 23S rRNA; its binding is stimulated by other ribosomal proteins, e.g. L4, L17, and L20. It is important during the early stages of 50S assembly. It makes multiple contacts with different domains of the 23S rRNA in the assembled 50S subunit and ribosome. Its function is as follows. The globular domain of the protein is located near the polypeptide exit tunnel on the outside of the subunit, while an extended beta-hairpin is found that lines the wall of the exit tunnel in the center of the 70S ribosome. The chain is Large ribosomal subunit protein uL22 from Rickettsia felis (strain ATCC VR-1525 / URRWXCal2) (Rickettsia azadi).